Reading from the N-terminus, the 91-residue chain is YcgL domain-containing protein ESA_01460 (91 aa).

Residues 1–85 enclose the YcgL domain; that stretch reads MFCVIYRSAR…PPENLLKQHL (85 aa).

The chain is YcgL domain-containing protein ESA_01460 from Cronobacter sakazakii (strain ATCC BAA-894) (Enterobacter sakazakii).